Here is a 715-residue protein sequence, read N- to C-terminus: Serine/arginine repetitive matrix protein 5 (715 aa).

The segment covering 1–13 (MSSPKRSSKPSMS) has biased composition (low complexity). The segment at 1-715 (MSSPKRSSKP…RSSSSSSKLA (715 aa)) is disordered. Positions 32–59 (LKSTKSATPNRSLVPTKPATSRNSVMSP) are enriched in polar residues. A compositionally biased stretch (low complexity) spans 60 to 79 (SSSKSTKSTSTKRAPSNRPS). Residues 80 to 90 (SRSRVRSKART) show a composition bias toward basic residues. The span at 92–104 (SRVSTDTRTSKAS) shows a compositional bias: polar residues. Basic residues predominate over residues 112–136 (HQRRGTHSRGRTPGRRGSRSSKRSP). Polar residues-rich tracts occupy residues 213 to 224 (TPSTAKCQTPTG) and 257 to 272 (YSPTEMSSRVKSYNQA). Over residues 273–285 (STRSRPQSHSQSR) the composition is skewed to low complexity. The segment covering 286–320 (SPRRSRSGSQKRTHSRVRSHSWKRNHSRARSRTRK) has biased composition (basic residues). 2 stretches are compositionally biased toward basic and acidic residues: residues 359-388 (PSKERSHSHSRSSSKERDHRGSSSPRKESG) and 397-521 (KQRD…ERDH). Positions 522–536 (RRSRSPSKERQRRQS) are enriched in basic residues. 2 stretches are compositionally biased toward basic and acidic residues: residues 539–595 (PNKE…DHSR) and 611–628 (SSKEKAHSRSRTPSKEGN). Positions 657 to 666 (TRTSSLSQNR) are enriched in polar residues. Positions 667 to 681 (TPSKTSSHSPSTFPS) are enriched in low complexity. A compositionally biased stretch (polar residues) spans 682–715 (GGQTLSQDDSQADATTSKATLPGERSSSSSSKLA).

The chain is Serine/arginine repetitive matrix protein 5 (SRRM5) from Homo sapiens (Human).